Here is a 274-residue protein sequence, read N- to C-terminus: Bis(5'-nucleosyl)-tetraphosphatase, symmetrical (274 aa).

The protein belongs to the Ap4A hydrolase family.

The catalysed reaction is P(1),P(4)-bis(5'-adenosyl) tetraphosphate + H2O = 2 ADP + 2 H(+). Hydrolyzes diadenosine 5',5'''-P1,P4-tetraphosphate to yield ADP. The sequence is that of Bis(5'-nucleosyl)-tetraphosphatase, symmetrical from Janthinobacterium sp. (strain Marseille) (Minibacterium massiliensis).